A 179-amino-acid polypeptide reads, in one-letter code: uncharacterized protein (179 aa).

An N-terminal signal peptide occupies residues Met-1 to Ala-19. The N-palmitoyl cysteine moiety is linked to residue Cys-20. Cys-20 is lipidated: S-diacylglycerol cysteine.

The protein localises to the cell membrane. This is an uncharacterized protein from Escherichia coli (strain K12).